A 390-amino-acid chain; its full sequence is S-adenosylmethionine synthase 2 (390 aa).

Glutamate 9 is a binding site for Mg(2+). Histidine 15 contributes to the ATP binding site. Glutamate 43 is a binding site for K(+). L-methionine is bound by residues glutamate 56 and glutamine 99. ATP is bound by residues 167–169 (DGK), 235–238 (SGRF), aspartate 246, 252–253 (RK), alanine 269, lysine 273, and lysine 277. Aspartate 246 is a binding site for L-methionine. Lysine 277 contacts L-methionine.

The protein belongs to the AdoMet synthase family. Homotetramer. Requires Mn(2+) as cofactor. Mg(2+) is required as a cofactor. Co(2+) serves as cofactor. It depends on K(+) as a cofactor.

The protein localises to the cytoplasm. It carries out the reaction L-methionine + ATP + H2O = S-adenosyl-L-methionine + phosphate + diphosphate. Its pathway is amino-acid biosynthesis; S-adenosyl-L-methionine biosynthesis; S-adenosyl-L-methionine from L-methionine: step 1/1. In terms of biological role, catalyzes the formation of S-adenosylmethionine from methionine and ATP. The reaction comprises two steps that are both catalyzed by the same enzyme: formation of S-adenosylmethionine (AdoMet) and triphosphate, and subsequent hydrolysis of the triphosphate. The sequence is that of S-adenosylmethionine synthase 2 (SAM2) from Petunia hybrida (Petunia).